The sequence spans 276 residues: Formamidopyrimidine-DNA glycosylase (276 aa).

The Schiff-base intermediate with DNA role is filled by P2. Catalysis depends on E3, which acts as the Proton donor. Residue K58 is the Proton donor; for beta-elimination activity of the active site. Positions 94, 112, and 157 each coordinate DNA. The FPG-type zinc-finger motif lies at 242 to 276 (FVYDRAGLPCRVCGTPIKQIVQGQRSTYFCPTCQR). R266 acts as the Proton donor; for delta-elimination activity in catalysis.

Belongs to the FPG family. As to quaternary structure, monomer. It depends on Zn(2+) as a cofactor.

It carries out the reaction Hydrolysis of DNA containing ring-opened 7-methylguanine residues, releasing 2,6-diamino-4-hydroxy-5-(N-methyl)formamidopyrimidine.. It catalyses the reaction 2'-deoxyribonucleotide-(2'-deoxyribose 5'-phosphate)-2'-deoxyribonucleotide-DNA = a 3'-end 2'-deoxyribonucleotide-(2,3-dehydro-2,3-deoxyribose 5'-phosphate)-DNA + a 5'-end 5'-phospho-2'-deoxyribonucleoside-DNA + H(+). Its function is as follows. Involved in base excision repair of DNA damaged by oxidation or by mutagenic agents. Acts as a DNA glycosylase that recognizes and removes damaged bases. Has a preference for oxidized purines, such as 7,8-dihydro-8-oxoguanine (8-oxoG). Has AP (apurinic/apyrimidinic) lyase activity and introduces nicks in the DNA strand. Cleaves the DNA backbone by beta-delta elimination to generate a single-strand break at the site of the removed base with both 3'- and 5'-phosphates. The protein is Formamidopyrimidine-DNA glycosylase of Paraburkholderia phytofirmans (strain DSM 17436 / LMG 22146 / PsJN) (Burkholderia phytofirmans).